A 60-amino-acid chain; its full sequence is uncharacterized protein (60 aa).

It localises to the host cytoplasm. This is an uncharacterized protein from Escherichia phage Mu (Bacteriophage Mu).